We begin with the raw amino-acid sequence, 474 residues long: MSKQFDVLVIGAGPGGYIAAIRAGQLGLNVACCEGNPYDDPKGEARLGGTCLNVGCIPSKALLASSEEFENVQHHLGDHGITVGDVKVDVAKMLKRKDDIVGKMTKGIEFLFRKNKVTLLKGYGKFVGKSAEGFQVDVAGEVVTAKQVIIATGSKARHLPGIKVDNDLVSDNEGALKFPAVPKKLGVIGAGVIGLELGSVWRRLGSDVTVLEALPAFLGAADEGVAKEAQKQLTKQGLKFSLGVNVNEVTTGKNGVTVKYTDKDGKAQTLEVDRLIVSVGRVPNTDNLGLDAVGLAADQRGFIEVDDHCATKVPGLWAIGDVVRGPMLAHKAEDEGVAVAERIAGQKPHIDYNCVPWVIYTFPEIAWVGKTEAQLKAEGREYKAGQFPFMANGRALGMGHADGFVKMLADAKTDEILGVHIVAANASDLIAEAVVAMEFKAASEDIGRVCHPHPSMSEVMREAALAVDKRQLNM.

Residues 34–51 (EGNP…GGTC), K60, and G124 contribute to the FAD site. The cysteines at positions 51 and 56 are disulfide-linked. NAD(+)-binding positions include 189-193 (GAGVI), E212, V246, and 278-281 (SVGR). 2 residues coordinate FAD: D321 and A329. H453 (proton acceptor) is an active-site residue.

Belongs to the class-I pyridine nucleotide-disulfide oxidoreductase family. FAD serves as cofactor.

Its subcellular location is the cytoplasm. The enzyme catalyses N(6)-[(R)-dihydrolipoyl]-L-lysyl-[protein] + NAD(+) = N(6)-[(R)-lipoyl]-L-lysyl-[protein] + NADH + H(+). Functionally, the branched-chain alpha-keto dehydrogenase complex catalyzes the overall conversion of alpha-keto acids to acyl-CoA and CO(2). It contains multiple copies of 3 enzymatic components: branched-chain alpha-keto acid decarboxylase (E1), lipoamide acyltransferase (E2) and lipoamide dehydrogenase (E3). In Cupriavidus necator (strain ATCC 17699 / DSM 428 / KCTC 22496 / NCIMB 10442 / H16 / Stanier 337) (Ralstonia eutropha), this protein is Dihydrolipoyl dehydrogenase (odhL).